Reading from the N-terminus, the 436-residue chain is Small ribosomal subunit protein uS5m (436 aa).

Positions Phe-152 to Val-218 constitute an S5 DRBM domain. Positions Gly-417–Asp-436 are disordered.

This sequence belongs to the universal ribosomal protein uS5 family. In terms of assembly, component of the mitochondrial ribosome small subunit (28S) which comprises a 12S rRNA and about 30 distinct proteins.

The protein resides in the mitochondrion. The chain is Small ribosomal subunit protein uS5m (mrps-5) from Caenorhabditis elegans.